The sequence spans 1642 residues: Mitochondrial 3' processome subunit 2 (1642 aa).

Residues 1–27 constitute a mitochondrion transit peptide; that stretch reads MGLPFLCHTRVCLFSNKIPFVLCGSRF. Disordered regions lie at residues 43-69 and 745-772; these read ETLN…PQKK and KGEK…LSGP. Residues 49–65 are compositionally biased toward polar residues; that stretch reads ELSSPSTSKEPSVGSDS.

Component of the mitochondrial 3' processome (MPsome) complex composed at least of terminal uridylyltransferase KRET1/TUT1, 3'-5' exonuclease DSS1, MPSS1, MPSS2 and MPSS3. Within the complex, interacts with DSS1.

The protein resides in the mitochondrion. Functionally, as part of the mitochondrial 3' processome (MPsome), involved in the maturation of guided RNA (gRNA) precursors. This chain is Mitochondrial 3' processome subunit 2, found in Trypanosoma brucei brucei.